The chain runs to 112 residues: MSELASMKCEACQADAPKVTDAELAELIRMIPDWSVQVRDGIMQLERVYKFKNFKLAMAFSNKLAELAEEEFHHPGIFTEWGKVTVTWWSHSIKGLHRNDFIMAAKTDQLLD.

This sequence belongs to the pterin-4-alpha-carbinolamine dehydratase family.

The enzyme catalyses (4aS,6R)-4a-hydroxy-L-erythro-5,6,7,8-tetrahydrobiopterin = (6R)-L-erythro-6,7-dihydrobiopterin + H2O. In Shewanella amazonensis (strain ATCC BAA-1098 / SB2B), this protein is Putative pterin-4-alpha-carbinolamine dehydratase.